A 471-amino-acid chain; its full sequence is TLNFTGTWYPITLLFILITAVHGQQIQINNIDTNHGYLLFSDKPVQIPSSFEHHSLKINLTEIDIVVDYFEQRLRTDYHAPQINFLYNKIKRELARITLKHRNKRGFINIVGSGFKYLFGTLDENDRVEIQKKLEINVHNSVKLHELNDAIRLINDGMQKIQNYENNHTIIDSLLFELMQFTEYIEDLEMAMQLSRLGLFNPKLLNYDKLENVNSQNILNIKTSTWINYNDNQVLIISHIPIYLSLISTIKIIPYPDSNGYQLDYTDTQSYFEKENKVYNTENKEVKNECVTNIIKHLNPICNFKPVHTNEIIKYIEPNTIVTWNLTQTILNQNCQNSINKIKIEGNKMIRVTQCKIEINNINFSETLLEPEIDLTPLYTPLNITKIKIVKHNDIIEMISENNITLYIQMIIVIIALILLYSYLRYVSFKPFMMLYAKLKIRKNQNQNTPQQTEIEEIPFPTLYPSIPAQV.

N-linked (GlcNAc...) asparagine glycosylation is found at N3, N59, N167, N325, N363, N383, and N403.

The chain is Retrovirus-related Env polyprotein from transposon 297 (env) from Drosophila melanogaster (Fruit fly).